A 240-amino-acid polypeptide reads, in one-letter code: Uridylate kinase (240 aa).

13–16 (KASG) is a binding site for ATP. The involved in allosteric activation by GTP stretch occupies residues 21 to 26 (GSQGFG). Gly-55 contributes to the UMP binding site. Residues Gly-56 and Arg-60 each contribute to the ATP site. Residues Asp-75 and 136-143 (TGNPFFTT) contribute to the UMP site. ATP contacts are provided by Thr-163, Gln-164, Tyr-169, and Asp-172.

It belongs to the UMP kinase family. As to quaternary structure, homohexamer.

It localises to the cytoplasm. It carries out the reaction UMP + ATP = UDP + ADP. It functions in the pathway pyrimidine metabolism; CTP biosynthesis via de novo pathway; UDP from UMP (UMPK route): step 1/1. With respect to regulation, allosterically activated by GTP. Inhibited by UTP. In terms of biological role, catalyzes the reversible phosphorylation of UMP to UDP. This is Uridylate kinase from Sinorhizobium medicae (strain WSM419) (Ensifer medicae).